We begin with the raw amino-acid sequence, 276 residues long: SKA complex subunit 1 homolog (276 aa).

Residues Val48 to Lys78 are a coiled coil.

It belongs to the SKA1 family.

The protein is SKA complex subunit 1 homolog of Oryza sativa subsp. indica (Rice).